The sequence spans 171 residues: Interleukin-26 (171 aa).

The signal sequence occupies residues methionine 1 to alanine 21.

Belongs to the IL-10 family. Homodimer. In terms of tissue distribution, expressed in HVS transformed T-cells but not other T-cell lines or primary stimulated T-cells. Expressed in colonic T-cells including Th17 inflammatory T-cells; the expression is significantly increased in serum of patients with Crohn's disease (at protein level).

It localises to the secreted. Functionally, may play a role in local mechanisms of mucosal immunity and seems to have a pro-inflammatory function. May play a role in inflammatory bowel disease. Activates STAT1 and STAT3, MAPK1/3 (ERK1/2), JUN and AKT. Induces expression of SOCS3, TNF-alpha and IL-8, secretion of IL-8 and IL-10 and surface expression of ICAM1. Decreases proliferation of intestinal epithelial cells. Is inhibited by heparin. In Homo sapiens (Human), this protein is Interleukin-26 (IL26).